The following is a 120-amino-acid chain: Large ribosomal subunit protein bL17 (120 aa).

The protein belongs to the bacterial ribosomal protein bL17 family. Part of the 50S ribosomal subunit. Contacts protein L32.

The protein is Large ribosomal subunit protein bL17 of Bacillus velezensis (strain DSM 23117 / BGSC 10A6 / LMG 26770 / FZB42) (Bacillus amyloliquefaciens subsp. plantarum).